Reading from the N-terminus, the 1138-residue chain is Eukaryotic translation initiation factor 3 subunit A (1138 aa).

In terms of domain architecture, PCI spans Leu319–Thr502. Disordered stretches follow at residues Asn590 to Gln633 and Glu817 to Arg1138. Basic and acidic residues-rich tracts occupy residues Glu817–Arg903, Asp923–Asp967, Gly1003–Gln1049, and Asp1058–Arg1078. The span at Pro1082 to Asn1100 shows a compositional bias: gly residues. Residues Pro1107–Asp1128 are compositionally biased toward basic and acidic residues.

The protein belongs to the eIF-3 subunit A family. As to quaternary structure, component of the eukaryotic translation initiation factor 3 (eIF-3) complex. The eIF-3 complex interacts with pix.

The protein localises to the cytoplasm. Its function is as follows. RNA-binding component of the eukaryotic translation initiation factor 3 (eIF-3) complex, which is involved in protein synthesis of a specialized repertoire of mRNAs and, together with other initiation factors, stimulates binding of mRNA and methionyl-tRNAi to the 40S ribosome. The eIF-3 complex specifically targets and initiates translation of a subset of mRNAs involved in cell proliferation. In Drosophila virilis (Fruit fly), this protein is Eukaryotic translation initiation factor 3 subunit A.